Here is a 110-residue protein sequence, read N- to C-terminus: UPF0122 protein SERP0802 (110 aa).

Belongs to the UPF0122 family.

Might take part in the signal recognition particle (SRP) pathway. This is inferred from the conservation of its genetic proximity to ftsY/ffh. May be a regulatory protein. This is UPF0122 protein SERP0802 from Staphylococcus epidermidis (strain ATCC 35984 / DSM 28319 / BCRC 17069 / CCUG 31568 / BM 3577 / RP62A).